The sequence spans 754 residues: Putative sulfate transporter YPR003C (754 aa).

The tract at residues 1 to 91 (MTSNNSLLGR…NTSNTNNNDS (91 aa)) is disordered. Topologically, residues 1 to 118 (MTSNNSLLGR…SWLPEYTFNK (118 aa)) are cytoplasmic. Residues 25 to 45 (RSVDQRDTFSDNFDYDKDSSN) are compositionally biased toward basic and acidic residues. A compositionally biased stretch (low complexity) spans 65-89 (NSRSGCTNNTNNTNNTSNTSNTNNN). A helical transmembrane segment spans residues 119–139 (LWGDVIAGISVASFQIPLALS). Topologically, residues 140-146 (YTTSIAH) are lumenal. Residues 147–167 (VPPLCGLYSLAISPFVYGILG) form a helical membrane-spanning segment. The Cytoplasmic portion of the chain corresponds to 168–172 (SVPQM). Residues 173-193 (IVGPESAISLVVGQAVESITL) form a helical membrane-spanning segment. The Lumenal segment spans residues 194-199 (HKENVS). A helical transmembrane segment spans residues 200–220 (LIDISTVITFVSGTILLFSGI). Residues 221–232 (SRFGFLGNVLSK) lie on the Cytoplasmic side of the membrane. A helical transmembrane segment spans residues 233 to 253 (ALLRGFISSVGLVMIINSLIS). Residues 254–282 (ELKLDKFLVSLPQHYHTPFEKILFLIDYA) are Lumenal-facing. A helical membrane pass occupies residues 283–303 (PAQYHIPTAIFSGCCLIVLFL). Topologically, residues 304–317 (TRLLKRKLMKYHKS) are cytoplasmic. The chain crosses the membrane as a helical span at residues 318–338 (AIFFPDILLVVIVTILISMKF). Over 339-370 (NLKHRYGISIIGDFSMDNFDELKNPLTRPRRK) the chain is Lumenal. Residues 371–391 (LIPDLFSASLIVAMLGFFEST) form a helical membrane-spanning segment. Residues 392–410 (TASKSLGTTYNLTVSSNRE) lie on the Cytoplasmic side of the membrane. The chain crosses the membrane as a helical span at residues 411–431 (LVALGFMNIVISLFGALPAFG). Residues 432–450 (GYGRSKINALSGAQSVMSG) are Lumenal-facing. The helical transmembrane segment at 451–471 (VFMGVITLITMNLLLQFVHYI) threads the bilayer. Topologically, residues 472–474 (PNC) are cytoplasmic. A helical transmembrane segment spans residues 475 to 495 (VLSVITTIIGISLLEEVPGDI). The Lumenal portion of the chain corresponds to 496–517 (KFHLRCGGFSELFVFAVTFCTT). Residues 518–538 (IFYSIEAGICIGCVYSIINII) form a helical membrane-spanning segment. At 539 to 754 (KHSAKSRIQI…SNTLFNSSLV (216 aa)) the chain is on the cytoplasmic side. In terms of domain architecture, STAS spans 574–725 (DVEGTEEIEG…DSIDAALYEI (152 aa)).

The protein belongs to the SLC26A/SulP transporter (TC 2.A.53) family.

The protein localises to the endoplasmic reticulum membrane. Its function is as follows. Possible sulfate transporter. This is Putative sulfate transporter YPR003C from Saccharomyces cerevisiae (strain ATCC 204508 / S288c) (Baker's yeast).